The following is a 104-amino-acid chain: Large ribosomal subunit protein uL24 (104 aa).

The protein belongs to the universal ribosomal protein uL24 family. In terms of assembly, part of the 50S ribosomal subunit.

Functionally, one of two assembly initiator proteins, it binds directly to the 5'-end of the 23S rRNA, where it nucleates assembly of the 50S subunit. Its function is as follows. One of the proteins that surrounds the polypeptide exit tunnel on the outside of the subunit. The polypeptide is Large ribosomal subunit protein uL24 (Alteromonas mediterranea (strain DSM 17117 / CIP 110805 / LMG 28347 / Deep ecotype)).